We begin with the raw amino-acid sequence, 595 residues long: APOBEC1 complementation factor (595 aa).

RRM domains are found at residues 56–134, 136–218, and 231–303; these read CEIF…ASVD, CRLF…WAEP, and KILY…LAKP. The required for nuclear localization stretch occupies residues 360–409; that stretch reads HFPATKGHLSNRALIRTPSVREIYMNVPVGAAGVRGLGGRGYLAYTGLGR.

As to quaternary structure, part of the apolipoprotein B mRNA editing complex with APOBEC1. Interacts with TNPO2; TNPO2 may be responsible for transport of A1CF into the nucleus. Interacts with SYNCRIP. Interacts with CELF2/CUGBP2. Interacts with RBM47. Expressed primarily in liver, small intestine and kidney.

The protein resides in the nucleus. It localises to the endoplasmic reticulum. The protein localises to the cytoplasm. In terms of biological role, essential component of the apolipoprotein B mRNA editing enzyme complex which is responsible for the postranscriptional editing of a CAA codon for Gln to a UAA codon for stop in APOB mRNA. Binds to APOB mRNA and is probably responsible for docking the catalytic subunit, APOBEC1, to the mRNA to allow it to deaminate its target cytosine. The complex also seems to protect the edited APOB mRNA from nonsense-mediated decay. This chain is APOBEC1 complementation factor (A1cf), found in Mus musculus (Mouse).